Consider the following 1142-residue polypeptide: Ribonucleoside-diphosphate reductase large subunit (1142 aa).

Residues 1–33 (MANRPAASALAGARSPSERQEPREPEVAPPGGD) are disordered. Residues 16-26 (PSERQEPREPE) show a composition bias toward basic and acidic residues. The RIP homotypic interaction motif (RHIM) motif lies at 55 to 75 (AYRISDSSFVQCGSNCSMIID). The segment at 118-322 (SGPSATTSVG…TDPGYPVPLE (205 aa)) is disordered. Positions 119 to 132 (GPSATTSVGTQTSG) are enriched in polar residues. Residues 141–159 (TPEPQGPQAVPPPPPPPFP) show a composition bias toward pro residues. A compositionally biased stretch (basic and acidic residues) spans 164–179 (CCARRDARGGAEKDVG). Residues 192-205 (SETEDSDSSDEDTG) are compositionally biased toward acidic residues. Residues 277–303 (GSATDPRASADSDSAAHAAAPQADVAP) show a composition bias toward low complexity. Positions 294-400 (AAAPQADVAP…CLDLPPVPPN (107 aa)) are alpha-crystallin domain. Residues Thr-571, 586–587 (SC), Gly-617, 796–800 (NLCTE), and 973–977 (PTAAS) each bind substrate. Residues Cys-587 and Cys-813 are joined by a disulfide bond. The active-site Proton acceptor is the Asn-796. Residue Cys-798 is the Cysteine radical intermediate of the active site. The Proton acceptor role is filled by Glu-800.

It belongs to the ribonucleoside diphosphate reductase large chain family. Heterotetramer composed of a homodimer of the large subunit (R1) and a homodimer of the small subunit (R2). Larger multisubunit protein complex are also active, composed of (R1)n(R2)n. May self-assemble (via RIP homotypic interaction motif/RHIM) into homomeric fibrillar amyloid structures. Interacts (via RHIM) with human RIPK1 (via RHIM). Interacts (via RHIM) with human RIPK3 (via RHIM). May interact (via RHIM) with human ZBP1 (via RHIM). Interacts (via C-terminus) with host CASP8.

The protein resides in the host cell membrane. Its subcellular location is the host endosome membrane. It catalyses the reaction a 2'-deoxyribonucleoside 5'-diphosphate + [thioredoxin]-disulfide + H2O = a ribonucleoside 5'-diphosphate + [thioredoxin]-dithiol. In terms of biological role, ribonucleoside-diphosphate reductase holoenzyme that provides the precursors necessary for viral DNA synthesis. Allows virus growth in non-dividing cells, as well as reactivation from latency in infected hosts. Catalyzes the biosynthesis of deoxyribonucleotides from the corresponding ribonucleotides. The N-terminal region confers antiapoptotic activity in differentiated cells such as neurons and is important for viral reactivation to increase neural survivability. Prevents host necroptosis by targeting host RIPK1 and RIPK3, thereby hampering the formation of necroptotic RIPK1-RIPK3 complexes. May form hetero-amyloid structures with host proteins RIPK3 or ZBP1, thereby preventing RIPK3- and ZBP1-mediated necroptosis. In addition, inhibits extrinsic apoptosis by targeting host CASP8. This chain is Ribonucleoside-diphosphate reductase large subunit, found in Homo sapiens (Human).